The chain runs to 144 residues: Deoxyuridine 5'-triphosphate nucleotidohydrolase (144 aa).

Residues 63–65 (RSG), Asn-76, and 80–82 (TID) contribute to the substrate site.

It belongs to the dUTPase family. The cofactor is Mg(2+).

The enzyme catalyses dUTP + H2O = dUMP + diphosphate + H(+). It functions in the pathway pyrimidine metabolism; dUMP biosynthesis; dUMP from dCTP (dUTP route): step 2/2. Functionally, this enzyme is involved in nucleotide metabolism: it produces dUMP, the immediate precursor of thymidine nucleotides and it decreases the intracellular concentration of dUTP so that uracil cannot be incorporated into DNA. The sequence is that of Deoxyuridine 5'-triphosphate nucleotidohydrolase from Bacteroides fragilis (strain YCH46).